A 185-amino-acid chain; its full sequence is RING-H2 finger protein ATL8 (185 aa).

The helical transmembrane segment at 28-48 (LVLILAVLLCALTCIIGLIAV) threads the bilayer. The RING-type; atypical zinc finger occupies 104-146 (CAICLTEFAAGDELRVLPQCGHGFHVSCIDTWLGSHSSCPSCR). The segment at 161–185 (PGSSSSGPEPDTRIKQREDGPDNLP) is disordered. Residues 170 to 185 (PDTRIKQREDGPDNLP) are compositionally biased toward basic and acidic residues.

Belongs to the RING-type zinc finger family. ATL subfamily.

It localises to the membrane. It carries out the reaction S-ubiquitinyl-[E2 ubiquitin-conjugating enzyme]-L-cysteine + [acceptor protein]-L-lysine = [E2 ubiquitin-conjugating enzyme]-L-cysteine + N(6)-ubiquitinyl-[acceptor protein]-L-lysine.. It participates in protein modification; protein ubiquitination. This chain is RING-H2 finger protein ATL8 (ATL8), found in Arabidopsis thaliana (Mouse-ear cress).